The chain runs to 166 residues: Phospholipase A2 inhibitor CgMIP-II (166 aa).

Positions 1–19 (MRLILLSGLLLLGTFLANG) are cleaved as a signal peptide. Positions 46-161 (LRYALMTVHN…CDDNLLVVCE (116 aa)) constitute a C-type lectin domain. 2 cysteine pairs are disulfide-bonded: Cys83–Cys160 and Cys138–Cys152. A glycan (N-linked (GlcNAc...) asparagine) is linked at Asn122.

This sequence belongs to the alpha-type phospholipase A2 inhibitor family. As to quaternary structure, homomer composed of 20-25-kDa subunits that form oligomers of 180 kDa. In terms of processing, N-glycosylated. The glycosidic chain may contain superficial sialic acid residues. As to expression, expressed by the liver.

It is found in the secreted. In terms of biological role, selectively inhibits the toxic properties of myotoxin-II from the same venom (AC P81165). Does not inhibit PLA2, anti-coagulant and lethal activities of the basic myotoxin I from the same venom (AC P0DQP6), nor the different crotoxin forms (heterodimer or subunit B alone). Does not block the enzymatic activity of crude acidic PLA2 fractions from the same venom. The polypeptide is Phospholipase A2 inhibitor CgMIP-II (Cerrophidion godmani (Porthidium godmani)).